Reading from the N-terminus, the 548-residue chain is Thermosome subunit beta (548 aa).

The protein belongs to the TCP-1 chaperonin family. As to quaternary structure, forms a Heterooligomeric complex of two stacked eight-membered rings.

Molecular chaperone; binds unfolded polypeptides in vitro, and has a weak ATPase activity. This Aeropyrum pernix (strain ATCC 700893 / DSM 11879 / JCM 9820 / NBRC 100138 / K1) protein is Thermosome subunit beta (thsB).